Consider the following 38-residue polypeptide: Large ribosomal subunit protein bL36 (38 aa).

Belongs to the bacterial ribosomal protein bL36 family.

The polypeptide is Large ribosomal subunit protein bL36 (Limosilactobacillus fermentum (strain NBRC 3956 / LMG 18251) (Lactobacillus fermentum)).